The sequence spans 427 residues: Adenylosuccinate synthetase (427 aa).

Residues 12 to 18 (GDEGKGK) and 40 to 42 (GHT) contribute to the GTP site. Aspartate 13 (proton acceptor) is an active-site residue. The Mg(2+) site is built by aspartate 13 and glycine 40. Residues 13–16 (DEGK), 38–41 (NAGH), threonine 130, arginine 144, glutamine 224, threonine 239, and arginine 303 contribute to the IMP site. The active-site Proton donor is histidine 41. A substrate-binding site is contributed by 299-305 (SVTGRPR). GTP contacts are provided by residues arginine 305, 331-333 (KLD), and 411-413 (SVG).

It belongs to the adenylosuccinate synthetase family. In terms of assembly, homodimer. It depends on Mg(2+) as a cofactor.

It localises to the cytoplasm. The enzyme catalyses IMP + L-aspartate + GTP = N(6)-(1,2-dicarboxyethyl)-AMP + GDP + phosphate + 2 H(+). It participates in purine metabolism; AMP biosynthesis via de novo pathway; AMP from IMP: step 1/2. Plays an important role in the de novo pathway of purine nucleotide biosynthesis. Catalyzes the first committed step in the biosynthesis of AMP from IMP. The polypeptide is Adenylosuccinate synthetase (Sorangium cellulosum (strain So ce56) (Polyangium cellulosum (strain So ce56))).